The chain runs to 761 residues: Putative pentatricopeptide repeat-containing protein At2g02150 (761 aa).

PPR repeat units follow at residues 141–175 (SVESYCIVAHILFCARMYYDANSVLKEMVLSKADC), 191–225 (GFGVFDALFSVLIDLGMLEEAIQCFSKMKRFRVFP), 226–260 (KTRSCNGLLHRFAKLGKTDDVKRFFKDMIGAGARP), 261–295 (TVFTYNIMIDCMCKEGDVEAARGLFEEMKFRGLVP), 296–330 (DTVTYNSMIDGFGKVGRLDDTVCFFEEMKDMCCEP), 331–365 (DVITYNALINCFCKFGKLPIGLEFYREMKGNGLKP), 366–400 (NVVSYSTLVDAFCKEGMMQQAIKFYVDMRRVGLVP), 401–435 (NEYTYTSLIDANCKIGNLSDAFRLGNEMLQVGVEW), 436–470 (NVVTYTALIDGLCDAERMKEAEELFGKMDTAGVIP), 471–505 (NLASYNALIHGFVKAKNMDRALELLNELKGRGIKP), 506–540 (DLLLYGTFIWGLCSLEKIEAAKVVMNEMKECGIKA), 541–575 (NSLIYTTLMDAYFKSGNPTEGLHLLDEMKELDIEV), 576–606 (TVVTFCVLIDGLCKNKLVSKAVDYFNRISND), 612–646 (NAAIFTAMIDGLCKDNQVEAATTLFEQMVQKGLVP), 647–681 (DRTAYTSLMDGNFKQGNVLEALALRDKMAEIGMKL), 682–716 (DLLAYTSLVWGLSHCNQLQKARSFLEEMIGEGIHP), and 717–751 (DEVLCISVLKKHYELGCIDEAVELQSYLMKHQLLT).

This sequence belongs to the PPR family. P subfamily.

This chain is Putative pentatricopeptide repeat-containing protein At2g02150, found in Arabidopsis thaliana (Mouse-ear cress).